The primary structure comprises 364 residues: MIMELENQLSKLHELKNNLKEMGASLDLASLEKKSAELELKMQEAGFWDDVQKAQEVTQEAKRVKDKIDKFKNLNERIDDVEVLKELMEENDEETAKEIISEVKALSKEIDTLKIETILSGEYDRNNAILTLHTGVGGSDANDWTEMLLRMYTRWCEKKGYSLETIDYLPGDEAGVKSVTLKVKGEFAYGYLKAEKGIHRLVRISPFNANGKRQTSFASVEVLPELTSDQDIEINPVDLRIDTYRAGGAGGQHVNKTESAVRITHIPTGIVVQCQNERSQFSNRDTAMGMLKSKLIELKERAHKEKIEDLTGELKDMGWGSQIRSYVFHPYSMVKDHRTNVETSNVNGVMGGDIDNFIIAYLNS.

Residue Gln-252 is modified to N5-methylglutamine.

It belongs to the prokaryotic/mitochondrial release factor family. Post-translationally, methylated by PrmC. Methylation increases the termination efficiency of RF2.

It localises to the cytoplasm. Functionally, peptide chain release factor 2 directs the termination of translation in response to the peptide chain termination codons UGA and UAA. This is Peptide chain release factor 2 from Clostridium perfringens (strain SM101 / Type A).